The sequence spans 1026 residues: RecBCD enzyme subunit RecB (1026 aa).

The region spanning 1 to 438 is the UvrD-like helicase ATP-binding domain; that stretch reads MSSFDIFSPT…LILDTNYRST (438 aa). Positions 1 to 766 are DNA-binding and helicase activity, interacts with RecC; the sequence is MSSFDIFSPT…LANYANVTKH (766 aa). Position 21-28 (21-28) interacts with ATP; that stretch reads ASAGTGKT. Residues 815-1026 form a nuclease activity, interacts with RecD and RecA region; sequence SRTIHSFSST…KGNGFLQPGR (212 aa). H854, D940, and D953 together coordinate Mg(2+). D953 acts as the For nuclease activity in catalysis.

The protein belongs to the helicase family. UvrD subfamily. As to quaternary structure, heterotrimer of RecB, RecC and RecD. All subunits contribute to DNA-binding. Interacts with RecA. The cofactor is Mg(2+).

It carries out the reaction Exonucleolytic cleavage (in the presence of ATP) in either 5'- to 3'- or 3'- to 5'-direction to yield 5'-phosphooligonucleotides.. The catalysed reaction is Couples ATP hydrolysis with the unwinding of duplex DNA by translocating in the 3'-5' direction.. The enzyme catalyses ATP + H2O = ADP + phosphate + H(+). A helicase/nuclease that prepares dsDNA breaks (DSB) for recombinational DNA repair. Binds to DSBs and unwinds DNA via a highly rapid and processive ATP-dependent bidirectional helicase activity. Unwinds dsDNA until it encounters a Chi (crossover hotspot instigator) sequence from the 3' direction. Cuts ssDNA a few nucleotides 3' to the Chi site. The properties and activities of the enzyme are changed at Chi. The Chi-altered holoenzyme produces a long 3'-ssDNA overhang and facilitates RecA-binding to the ssDNA for homologous DNA recombination and repair. Holoenzyme degrades any linearized DNA that is unable to undergo homologous recombination. In the holoenzyme this subunit contributes ATPase, 3'-5' helicase, exonuclease activity and loads RecA onto ssDNA. This Chlamydia trachomatis serovar D (strain ATCC VR-885 / DSM 19411 / UW-3/Cx) protein is RecBCD enzyme subunit RecB.